A 327-amino-acid polypeptide reads, in one-letter code: Ribose-phosphate pyrophosphokinase (327 aa).

Residue 51 to 53 (DGE) coordinates ATP. 2 residues coordinate Mg(2+): His144 and Asp183. Lys207 is a catalytic residue. Residues Arg209, Asp233, and 237 to 241 (DTGGT) contribute to the D-ribose 5-phosphate site.

This sequence belongs to the ribose-phosphate pyrophosphokinase family. Class I subfamily. As to quaternary structure, homohexamer. The cofactor is Mg(2+).

The protein resides in the cytoplasm. It carries out the reaction D-ribose 5-phosphate + ATP = 5-phospho-alpha-D-ribose 1-diphosphate + AMP + H(+). It functions in the pathway metabolic intermediate biosynthesis; 5-phospho-alpha-D-ribose 1-diphosphate biosynthesis; 5-phospho-alpha-D-ribose 1-diphosphate from D-ribose 5-phosphate (route I): step 1/1. Involved in the biosynthesis of the central metabolite phospho-alpha-D-ribosyl-1-pyrophosphate (PRPP) via the transfer of pyrophosphoryl group from ATP to 1-hydroxyl of ribose-5-phosphate (Rib-5-P). The chain is Ribose-phosphate pyrophosphokinase from Prochlorococcus marinus (strain SARG / CCMP1375 / SS120).